Consider the following 345-residue polypeptide: Methionine import ATP-binding protein MetN (345 aa).

Residues 2 to 241 form the ABC transporter domain; sequence IKLNNITKIF…PKTELAQEFI (240 aa). 38–45 serves as a coordination point for ATP; sequence GASGAGKS.

It belongs to the ABC transporter superfamily. Methionine importer (TC 3.A.1.24) family. In terms of assembly, the complex is composed of two ATP-binding proteins (MetN), two transmembrane proteins (MetI) and a solute-binding protein (MetQ).

The protein resides in the cell inner membrane. The catalysed reaction is L-methionine(out) + ATP + H2O = L-methionine(in) + ADP + phosphate + H(+). It carries out the reaction D-methionine(out) + ATP + H2O = D-methionine(in) + ADP + phosphate + H(+). Part of the ABC transporter complex MetNIQ involved in methionine import. Responsible for energy coupling to the transport system. The chain is Methionine import ATP-binding protein MetN from Haemophilus influenzae (strain 86-028NP).